Here is a 249-residue protein sequence, read N- to C-terminus: 2,3-bisphosphoglycerate-dependent phosphoglycerate mutase (249 aa).

Residues 11 to 18, 24 to 25, Arg63, 90 to 93, Lys101, 117 to 118, and 184 to 185 each bind substrate; these read RHGESDWN, TG, ERHY, RR, and GN. His12 acts as the Tele-phosphohistidine intermediate in catalysis. Residue Glu90 is the Proton donor/acceptor of the active site.

This sequence belongs to the phosphoglycerate mutase family. BPG-dependent PGAM subfamily.

It carries out the reaction (2R)-2-phosphoglycerate = (2R)-3-phosphoglycerate. The protein operates within carbohydrate degradation; glycolysis; pyruvate from D-glyceraldehyde 3-phosphate: step 3/5. Catalyzes the interconversion of 2-phosphoglycerate and 3-phosphoglycerate. The chain is 2,3-bisphosphoglycerate-dependent phosphoglycerate mutase from Mycobacterium bovis (strain BCG / Pasteur 1173P2).